The following is a 346-amino-acid chain: MAGNRARIAVDAMGGDHAPNEIVAGAIRASEELDVDILLVGDRPSIEASLQHHHPSPNIEIVDAEGAIEMHEGISELRRKPKASINVSMDLVKKNRADAVVSAGHSGAAMGAATLRLGRLKGIDRPAIGTVFPTLLAGKSVIILDVGANVDCRPKYLEQFALMGTIYSQYVMGVEQPKVGLLNIGEESSKGNDLALATYQLLENNKTIPFIGNAEGRDVLSGRFDVIVCDGFVGNVLLKFAEAVGEIVLQIMREELPQGWRGILGTAILKPNLKKLKQRIDHAEHGGALLLGVAGVCIISHGSSYGPSIFNAIRLAKEAIDHQVLDRIKASQENPTPDSVQASVEK.

This sequence belongs to the PlsX family. As to quaternary structure, homodimer. Probably interacts with PlsY.

The protein localises to the cytoplasm. It carries out the reaction a fatty acyl-[ACP] + phosphate = an acyl phosphate + holo-[ACP]. It functions in the pathway lipid metabolism; phospholipid metabolism. Its function is as follows. Catalyzes the reversible formation of acyl-phosphate (acyl-PO(4)) from acyl-[acyl-carrier-protein] (acyl-ACP). This enzyme utilizes acyl-ACP as fatty acyl donor, but not acyl-CoA. The chain is Phosphate acyltransferase from Crocosphaera subtropica (strain ATCC 51142 / BH68) (Cyanothece sp. (strain ATCC 51142)).